Consider the following 365-residue polypeptide: Phospho-N-acetylmuramoyl-pentapeptide-transferase (365 aa).

A run of 10 helical transmembrane segments spans residues 15–35 (PSGTQLLGLLSVLLVGLAVLI), 51–71 (VPVLVSAIVAGIFGMWIVPLL), 96–116 (TMGGLIFLPVGLAAGVIFAGF), 121–141 (IAVALVTLAYGVIGWVDDWQV), 156–176 (LILQIAIAVVFCIWLALTAPE), 180–200 (ITFFAGLSLPLGVFFWALAGF), 217–237 (GLAGGTGAIAFLGVGALALPA), 238–258 (HPGLSLLCACLSGACLGFIYH), 279–299 (LAAAGILSGNIWGLLIISGIF), and 344–364 (TQIVGAFYLINLGLVLLSFIL).

It belongs to the glycosyltransferase 4 family. MraY subfamily. The cofactor is Mg(2+).

It localises to the cell inner membrane. The enzyme catalyses UDP-N-acetyl-alpha-D-muramoyl-L-alanyl-gamma-D-glutamyl-meso-2,6-diaminopimeloyl-D-alanyl-D-alanine + di-trans,octa-cis-undecaprenyl phosphate = di-trans,octa-cis-undecaprenyl diphospho-N-acetyl-alpha-D-muramoyl-L-alanyl-D-glutamyl-meso-2,6-diaminopimeloyl-D-alanyl-D-alanine + UMP. It functions in the pathway cell wall biogenesis; peptidoglycan biosynthesis. Catalyzes the initial step of the lipid cycle reactions in the biosynthesis of the cell wall peptidoglycan: transfers peptidoglycan precursor phospho-MurNAc-pentapeptide from UDP-MurNAc-pentapeptide onto the lipid carrier undecaprenyl phosphate, yielding undecaprenyl-pyrophosphoryl-MurNAc-pentapeptide, known as lipid I. The chain is Phospho-N-acetylmuramoyl-pentapeptide-transferase from Picosynechococcus sp. (strain ATCC 27264 / PCC 7002 / PR-6) (Agmenellum quadruplicatum).